The primary structure comprises 97 residues: Small ribosomal subunit protein bS6 (97 aa).

This sequence belongs to the bacterial ribosomal protein bS6 family.

In terms of biological role, binds together with bS18 to 16S ribosomal RNA. The chain is Small ribosomal subunit protein bS6 from Syntrophomonas wolfei subsp. wolfei (strain DSM 2245B / Goettingen).